The primary structure comprises 93 residues: Alpha-defensin 15 (93 aa).

The N-terminal stretch at 1-19 (MKTLVLLSALVLLAFQVQA) is a signal peptide. A propeptide spanning residues 20–58 (DPIQNTDEETKTEEQPGEDDQAVSVSFGDPEGSSLQEES) is cleaved from the precursor. The disordered stretch occupies residues 23 to 56 (QNTDEETKTEEQPGEDDQAVSVSFGDPEGSSLQE). Cystine bridges form between Cys-64/Cys-92, Cys-66/Cys-81, and Cys-71/Cys-91.

The protein belongs to the alpha-defensin family. Paneth cells of the small bowel.

It localises to the secreted. Its function is as follows. Probably contributes to the antimicrobial barrier function of the small bowel mucosa. The protein is Alpha-defensin 15 (Defa15) of Mus musculus (Mouse).